Consider the following 312-residue polypeptide: Olfactory receptor 1493 (312 aa).

At M1–Q23 the chain is on the extracellular side. N-linked (GlcNAc...) asparagine glycosylation is present at N3. Residues L24 to Q48 traverse the membrane as a helical segment. Over L49 to T55 the chain is Cytoplasmic. Residues P56–L77 traverse the membrane as a helical segment. Over K78–Q98 the chain is Extracellular. An intrachain disulfide couples C95 to C187. The chain crosses the membrane as a helical span at residues I99–Y118. Residues D119–K137 are Cytoplasmic-facing. The chain crosses the membrane as a helical span at residues L138 to M156. The Extracellular segment spans residues H157–E194. The chain crosses the membrane as a helical span at residues L195 to A217. At K218 to K234 the chain is on the cytoplasmic side. The chain crosses the membrane as a helical span at residues V235–L258. The Extracellular segment spans residues C259–S270. A helical membrane pass occupies residues A271–L290. Over R291–W312 the chain is Cytoplasmic.

It belongs to the G-protein coupled receptor 1 family. As to expression, olfactory epithelium.

It localises to the cell membrane. Odorant receptor. This Rattus norvegicus (Rat) protein is Olfactory receptor 1493 (Olr1493).